Reading from the N-terminus, the 233-residue chain is tRNA pseudouridine synthase B (233 aa).

The active-site Nucleophile is D48.

It belongs to the pseudouridine synthase TruB family. Type 1 subfamily.

The enzyme catalyses uridine(55) in tRNA = pseudouridine(55) in tRNA. Responsible for synthesis of pseudouridine from uracil-55 in the psi GC loop of transfer RNAs. The chain is tRNA pseudouridine synthase B from Bacteroides fragilis (strain ATCC 25285 / DSM 2151 / CCUG 4856 / JCM 11019 / LMG 10263 / NCTC 9343 / Onslow / VPI 2553 / EN-2).